Here is a 435-residue protein sequence, read N- to C-terminus: Hydrogenobyrinate a,c-diamide synthase (435 aa).

A GATase cobBQ-type domain is found at 247–435; the sequence is RIALARDAAF…TGSFFHLIAG (189 aa). Cys329 functions as the Nucleophile in the catalytic mechanism.

This sequence belongs to the CobB/CbiA family. Mg(2+) is required as a cofactor.

The enzyme catalyses hydrogenobyrinate + 2 L-glutamine + 2 ATP + 2 H2O = hydrogenobyrinate a,c-diamide + 2 L-glutamate + 2 ADP + 2 phosphate + 2 H(+). The protein operates within cofactor biosynthesis; adenosylcobalamin biosynthesis; cob(II)yrinate a,c-diamide from precorrin-2 (aerobic route): step 9/10. Catalyzes the ATP-dependent amidation of the two carboxylate groups at positions a and c of hydrogenobyrinate, using either L-glutamine or ammonia as the nitrogen source. This Rhodobacter capsulatus (strain ATCC BAA-309 / NBRC 16581 / SB1003) protein is Hydrogenobyrinate a,c-diamide synthase.